We begin with the raw amino-acid sequence, 470 residues long: TNF receptor-associated factor 4 (470 aa).

The RING-type zinc finger occupies 18-58 (CPLCGKPMREPVQVSTCGHRFCDTCLQEFLSEGVFKCPEDQ). TRAF-type zinc fingers lie at residues 101–154 (GHLN…EAYE), 155–208 (SHEG…DTIQ), and 209–267 (SHQY…LAMG). K263 participates in a covalent cross-link: Glycyl lysine isopeptide (Lys-Gly) (interchain with G-Cter in ubiquitin). Positions 277-310 (HLAMMCALVSRQRQELQELRRELEELSIGSDGVL) form a coiled coil. In terms of domain architecture, MATH spans 307–462 (DGVLIWKIGS…DDAVFIRASV (156 aa)). S426 carries the phosphoserine modification.

Belongs to the TNF receptor-associated factor family. B subfamily. As to quaternary structure, homotrimer. Interacts with LTBR/TNFRSF3, NGFR/TNFRSF16, RPS6KB1 and TGFB1I1. Interacts with SMURF1. Interacts (via TRAF domain) with MAP3K4 (via kinase domain). Interacts with NCF1, TICAM1, IRAK1 and TRAF6, and is probably part of a complex containing TRAF4, NCF1, TICAM1, IRAK1 and TRAF6. Interacts (via MATH domain) with GP6 and GP1BB. Interacts with EGFR (via C-terminal region); this interaction promotes the formation of EGFR asymmetric dimers. Interacts with PKM; this interaction promotes PKM kinase activity. Polyubiquitinated, leading to its proteasomal degradation. Ubiquitinated at Lys-263 by the SCF(FBXL2) complex, leading to its degradation by the proteasome. As to expression, predominantly expressed in brain. Preferentially expressed by postmitotic undifferentiated neurons in developing central (CNS) and peripheral (PNS) nervous system, and in nervous tissues of sensory organs. In the embryo, protein expression was shown in brain, thymus, salivary glands and intestine. In the adult, protein expression is restricted to the brain (hippocampus and olfactory bulb).

It localises to the cytoplasm. Its subcellular location is the nucleus. The protein localises to the perinuclear region. The protein resides in the cell junction. It is found in the tight junction. It localises to the cell membrane. Its subcellular location is the cytoskeleton. It catalyses the reaction S-ubiquitinyl-[E2 ubiquitin-conjugating enzyme]-L-cysteine + [acceptor protein]-L-lysine = [E2 ubiquitin-conjugating enzyme]-L-cysteine + N(6)-ubiquitinyl-[acceptor protein]-L-lysine.. The protein operates within protein degradation; proteasomal ubiquitin-dependent pathway. Its function is as follows. Adapter protein with E3 ligase activity that is involved in many diverse biological processes including cell proliferation, migration, differentiation, DNA repair, platelet activation or apoptosis. Promotes EGFR-mediated signaling by facilitating the dimerization of EGFR and downstream AKT activation thereby promoting cell proliferation. Ubiquitinates SMURF2 through 'Lys-48'-linked ubiquitin chain leading to SMURF2 degradation through the proteasome and subsequently osteogenic differentiation. Promotes 'Lys-63'-mediated ubiquitination of CHK1 which in turn activates cell cycle arrest and activation of DNA repair. In addition, promotes an atypical 'Lys-29'-linked ubiquitination at the C-terminal end of IRS1 which is crucial for insulin-like growth factor (IGF) signal transduction. Regulates activation of NF-kappa-B in response to signaling through Toll-like receptors. Required for normal skeleton development, and for normal development of the respiratory tract. Required for activation of RPS6KB1 in response to TNF signaling. Modulates TRAF6 functions. Inhibits adipogenic differentiation by activating pyruvate kinase PKM activity and subsequently the beta-catenin signaling pathway. The sequence is that of TNF receptor-associated factor 4 (Traf4) from Mus musculus (Mouse).